The sequence spans 224 residues: Flagellar L-ring protein (224 aa).

Positions 1-15 (MKWYLVALSGLLLSG) are cleaved as a signal peptide. A lipid anchor (N-palmitoyl cysteine) is attached at Cys16. A lipid anchor (S-diacylglycerol cysteine) is attached at Cys16.

The protein belongs to the FlgH family. As to quaternary structure, the basal body constitutes a major portion of the flagellar organelle and consists of four rings (L,P,S, and M) mounted on a central rod.

Its subcellular location is the cell outer membrane. It localises to the bacterial flagellum basal body. Assembles around the rod to form the L-ring and probably protects the motor/basal body from shearing forces during rotation. This Trichlorobacter lovleyi (strain ATCC BAA-1151 / DSM 17278 / SZ) (Geobacter lovleyi) protein is Flagellar L-ring protein.